We begin with the raw amino-acid sequence, 73 residues long: Translational regulator CsrA (73 aa).

A disordered region spans residues 54 to 73 (ENRAASDSPWSPNSLPQLPV). A compositionally biased stretch (polar residues) spans 61–73 (SPWSPNSLPQLPV).

It belongs to the CsrA/RsmA family. As to quaternary structure, homodimer; the beta-strands of each monomer intercalate to form a hydrophobic core, while the alpha-helices form wings that extend away from the core.

It is found in the cytoplasm. Its function is as follows. A translational regulator that binds mRNA to regulate translation initiation and/or mRNA stability. Usually binds in the 5'-UTR at or near the Shine-Dalgarno sequence preventing ribosome-binding, thus repressing translation. Its main target seems to be the major flagellin gene, while its function is anatagonized by FliW. The chain is Translational regulator CsrA from Treponema pallidum (strain Nichols).